Consider the following 638-residue polypeptide: DNA mismatch repair protein MutL (638 aa).

Residues 404–433 (FGTQTNAFGSMATPRDNSRGNYSAGESRQR) form a disordered region.

This sequence belongs to the DNA mismatch repair MutL/HexB family.

Functionally, this protein is involved in the repair of mismatches in DNA. It is required for dam-dependent methyl-directed DNA mismatch repair. May act as a 'molecular matchmaker', a protein that promotes the formation of a stable complex between two or more DNA-binding proteins in an ATP-dependent manner without itself being part of a final effector complex. The chain is DNA mismatch repair protein MutL from Shewanella baltica (strain OS195).